Here is a 170-residue protein sequence, read N- to C-terminus: Interferon gamma (170 aa).

The signal sequence occupies residues 1–20 (MNSRLCIMALLLCFSQALLG). N-linked (GlcNAc...) asparagine glycosylation is found at asparagine 36 and asparagine 103.

The protein belongs to the type II (or gamma) interferon family. As to quaternary structure, homodimer. Interacts with IFNGR1 (via extracellular domain); this interaction promotes IFNGR1 dimerization. Released primarily from activated T lymphocytes.

The protein resides in the secreted. Type II interferon produced by immune cells such as T-cells and NK cells that plays crucial roles in antimicrobial, antiviral, and antitumor responses by activating effector immune cells and enhancing antigen presentation. Primarily signals through the JAK-STAT pathway after interaction with its receptor IFNGR1 to affect gene regulation. Upon IFNG binding, IFNGR1 intracellular domain opens out to allow association of downstream signaling components JAK2, JAK1 and STAT1, leading to STAT1 activation, nuclear translocation and transcription of IFNG-regulated genes. Many of the induced genes are transcription factors such as IRF1 that are able to further drive regulation of a next wave of transcription. Plays a role in class I antigen presentation pathway by inducing a replacement of catalytic proteasome subunits with immunoproteasome subunits. In turn, increases the quantity, quality, and repertoire of peptides for class I MHC loading. Increases the efficiency of peptide generation also by inducing the expression of activator PA28 that associates with the proteasome and alters its proteolytic cleavage preference. Up-regulates as well MHC II complexes on the cell surface by promoting expression of several key molecules such as cathepsins B/CTSB, H/CTSH, and L/CTSL. Participates in the regulation of hematopoietic stem cells during development and under homeostatic conditions by affecting their development, quiescence, and differentiation. The sequence is that of Interferon gamma (IFNG) from Sigmodon hispidus (Hispid cotton rat).